The following is a 602-amino-acid chain: MNQFYQSTTGGQQNNNNGNQFQQYQPQQQQQFQQYSPSNANNNNTTTTTTTSTSKKGKNKDNQSKQQQIQQQQIQQQQQQQQQQQQQIQQQSVDTPSSYNGDGSDDGSDTERENKKNRNRVNQNLASRNYRQRKKEYIKEIEEKLAVLALENDQLKKENINLKKGGGVEIMKPDPAFITMMMEAKQIIIQLDVAIKKNDERSLIYLLQLFHLSIEKRHTIVEREVEKMVHPYTQAKLAAMGYVPSLENPMISSISGPSSDGWWTMYISEAQITEEQAKAIKQLRSNHWKADIELRNEREKLDRSIKEFYLNRVMVFPTNERLNKSFATNLSLSDGPNPTSPNSSSVTQSTLVRPSPGLTLLNNLNEENNNSNNSSNSSNNNTTTNNNNNNSLTPTPNQNNNISNIAVNGTISVVNELGFSPINGNIDISEILEFTRKLEALKKNFVKQRTLMEDTHSALSSILTPKQEAMLLVRVHSSTRYDFANMEMLKNVWGSVIAKDTTSYPQPPTFSQQTQQLQQAQLQLQNQTKQQQQQLQNNNNNNNNNNNNNNSFNNSNNNNVQNNSSNPSTPGGNNDQQNIYYTSSPSIPSSPYNHHQQQPSRQ.

Residues 1–10 are compositionally biased toward polar residues; that stretch reads MNQFYQSTTG. The segment at 1–128 is disordered; that stretch reads MNQFYQSTTG…NRVNQNLASR (128 aa). Composition is skewed to low complexity over residues 11–54 and 66–102; these read GQQN…TSTS and QQQIQQQQIQQQQQQQQQQQQQIQQQSVDTPSSYNGD. Residues 58-94 adopt a coiled-coil conformation; that stretch reads KNKDNQSKQQQIQQQQIQQQQQQQQQQQQQIQQQSVD. Residues 113 to 176 enclose the bZIP domain; that stretch reads ENKKNRNRVN…GVEIMKPDPA (64 aa). Residues 115 to 135 are basic motif; it reads KKNRNRVNQNLASRNYRQRKK. Residues 138–145 form a leucine-zipper region; sequence IKEIEEKL. 2 disordered regions span residues 328-401 and 525-602; these read TNLS…QNNN and QNQT…PSRQ. 3 stretches are compositionally biased toward low complexity: residues 336 to 350, 358 to 401, and 525 to 592; these read PNPTSPNSSSVTQST, LTLL…QNNN, and QNQT…SSPY. The stretch at 509 to 552 forms a coiled coil; that stretch reads TFSQQTQQLQQAQLQLQNQTKQQQQQLQNNNNNNNNNNNNNNSF. The span at 593–602 shows a compositional bias: polar residues; that stretch reads NHHQQQPSRQ.

It belongs to the bZIP family. In terms of assembly, binds DNA as a dimer. Heterodimerizes with dimA; in vitro. Also able to form homodimer; in vitro.

Its subcellular location is the nucleus. Transcriptional regulator involved in DIF-1 signaling. DIF-1 (Differentiation Inducing Factor-1) is a signal molecule involved in the differentiation of pstO (prestalk-O) cells. May be a direct activator of ecmA. The polypeptide is Basic-leucine zipper transcription factor B (dimB) (Dictyostelium discoideum (Social amoeba)).